Here is a 440-residue protein sequence, read N- to C-terminus: Argininosuccinate lyase (440 aa).

It belongs to the lyase 1 family. Argininosuccinate lyase subfamily.

It is found in the cytoplasm. It catalyses the reaction 2-(N(omega)-L-arginino)succinate = fumarate + L-arginine. It participates in amino-acid biosynthesis; L-arginine biosynthesis; L-arginine from L-ornithine and carbamoyl phosphate: step 3/3. In Clostridium botulinum (strain ATCC 19397 / Type A), this protein is Argininosuccinate lyase.